The chain runs to 556 residues: Formate--tetrahydrofolate ligase (556 aa).

Position 65–72 (65–72) interacts with ATP; sequence TPAGEGKS.

It belongs to the formate--tetrahydrofolate ligase family.

It catalyses the reaction (6S)-5,6,7,8-tetrahydrofolate + formate + ATP = (6R)-10-formyltetrahydrofolate + ADP + phosphate. Its pathway is one-carbon metabolism; tetrahydrofolate interconversion. The chain is Formate--tetrahydrofolate ligase from Clostridium perfringens (strain SM101 / Type A).